An 84-amino-acid chain; its full sequence is Transcription elongation factor 1 homolog (84 aa).

Zn(2+) contacts are provided by Cys-26, Cys-29, Cys-50, and Cys-53.

Belongs to the ELOF1 family.

Its subcellular location is the nucleus. Transcription elongation factor implicated in the maintenance of proper chromatin structure in actively transcribed regions. The sequence is that of Transcription elongation factor 1 homolog from Caenorhabditis elegans.